The primary structure comprises 509 residues: ATP synthase subunit alpha (509 aa).

169-176 lines the ATP pocket; it reads GDRQTGKT.

The protein belongs to the ATPase alpha/beta chains family. F-type ATPases have 2 components, CF(1) - the catalytic core - and CF(0) - the membrane proton channel. CF(1) has five subunits: alpha(3), beta(3), gamma(1), delta(1), epsilon(1). CF(0) has three main subunits: a(1), b(2) and c(9-12). The alpha and beta chains form an alternating ring which encloses part of the gamma chain. CF(1) is attached to CF(0) by a central stalk formed by the gamma and epsilon chains, while a peripheral stalk is formed by the delta and b chains.

The protein resides in the cell inner membrane. The catalysed reaction is ATP + H2O + 4 H(+)(in) = ADP + phosphate + 5 H(+)(out). Produces ATP from ADP in the presence of a proton gradient across the membrane. The alpha chain is a regulatory subunit. This chain is ATP synthase subunit alpha, found in Zymomonas mobilis subsp. mobilis (strain ATCC 31821 / ZM4 / CP4).